The sequence spans 297 residues: Putative lipid kinase MamU (297 aa).

Residues 43 to 131 enclose the DAGKc domain; that stretch reads EGKDMGRMVR…MDVGRVNDRY (89 aa). 68–74 serves as a coordination point for ATP; it reads GDGSLSR. E274 acts as the Proton acceptor in catalysis.

Belongs to the diacylglycerol/lipid kinase family.

Its subcellular location is the cytoplasm. Its function is as follows. Might phosphorylate lipids. The chain is Putative lipid kinase MamU from Magnetospirillum gryphiswaldense (strain DSM 6361 / JCM 21280 / NBRC 15271 / MSR-1).